Consider the following 1694-residue polypeptide: Homeobox-DDT domain protein RLT2 (1694 aa).

The disordered stretch occupies residues 1–24 (MEGGSEKTTPEGCGGESKSKRKMK). Residues 17 to 76 (SKSKRKMKTAAQLEVLENTYSAEPYPSEAIRADLSVKLNLSDRQLQMWFCHRRLKERKST) constitute a DNA-binding region (homeobox). The DDT domain occupies 514–573 (DENVANLLMVWRFLITFADVLGLWPFTLDEFAQAFHDYDPRLMGEIHIVLLKTIIKDIEG). Residues 696-765 (GTVKFAAFHV…APSTYCVRAS (70 aa)) enclose the HTH HARE-type domain. The span at 795-816 (EDVDDAERDEDSESDVGEDPEV) shows a compositional bias: acidic residues. 4 disordered regions span residues 795–822 (EDVDDAERDEDSESDVGEDPEVDVNLKK), 1450–1541 (KQEE…ICNE), 1555–1639 (AKTS…MNMK), and 1655–1674 (EDSYGRKQHGISISNDAATR). A phosphoserine mark is found at Ser-806 and Ser-808. The segment covering 1459-1470 (GLGGVSSSGRGG) has biased composition (gly residues). 2 stretches are compositionally biased toward basic residues: residues 1471 to 1485 (RPPRGRGRPRARGNG) and 1515 to 1531 (GGRKNGRRSGTKGRKRP). Acidic residues-rich tracts occupy residues 1561–1578 (DNDDDWIETPELQDDDGE), 1589–1605 (EDYDDDDVMAPIDDFDG), and 1624–1635 (DEYEEEEEEEED).

In terms of assembly, interacts with CHR11. Interacts (via the DDT domain) with CHR11 (via C-terminus). Highly expressed in growing tissues such as inflorescence and flower meristems, young leaves and floral organs. Expressed in roots, rosette and cauline leaves, stems, flowers, inflorescences and siliques.

Its subcellular location is the nucleus. Its function is as follows. Transcriptional regulator required for the maintenance of the plant vegetative phase. In association with CHR11 or CHR17 may prevent the early activation of the vegetative-to-reproductive transition by regulating key genes that contribute to flower timing, such as FT, SEP1, SEP3, AGL8/FUL, SOC1 and FLC. Involved in the transcriptional regulation of seed-specific gene expression. This chain is Homeobox-DDT domain protein RLT2, found in Arabidopsis thaliana (Mouse-ear cress).